The primary structure comprises 185 residues: Ribosome-recycling factor (185 aa).

The protein belongs to the RRF family.

The protein localises to the cytoplasm. In terms of biological role, responsible for the release of ribosomes from messenger RNA at the termination of protein biosynthesis. May increase the efficiency of translation by recycling ribosomes from one round of translation to another. This Pseudomonas fluorescens (strain Pf0-1) protein is Ribosome-recycling factor.